A 363-amino-acid chain; its full sequence is Protein TAX-1 (363 aa).

The segment at 129–363 is required for localization to the flagellum and for flagellar motility; it reads RYGNAEEILS…IPFRGVAAEQ (235 aa). TPR repeat units follow at residues 157-190 and 199-232; these read AELHQTFGLLYAADNKLDVSVKHLTCATYYLSVM and TFAYFDLANVFATKACMEAAMALYDTVKNIWLKH.

As to quaternary structure, interacts with TTC29.

Its subcellular location is the cytoplasm. It localises to the cytoskeleton. The protein localises to the flagellum axoneme. In terms of biological role, required for flagellum motility. The polypeptide is Protein TAX-1 (Trypanosoma brucei brucei (strain 927/4 GUTat10.1)).